A 242-amino-acid chain; its full sequence is Demethylmenaquinone methyltransferase (242 aa).

T74 and D93 together coordinate S-adenosyl-L-methionine.

It belongs to the class I-like SAM-binding methyltransferase superfamily. MenG/UbiE family.

The enzyme catalyses a 2-demethylmenaquinol + S-adenosyl-L-methionine = a menaquinol + S-adenosyl-L-homocysteine + H(+). It participates in quinol/quinone metabolism; menaquinone biosynthesis; menaquinol from 1,4-dihydroxy-2-naphthoate: step 2/2. Functionally, methyltransferase required for the conversion of demethylmenaquinol (DMKH2) to menaquinol (MKH2). The protein is Demethylmenaquinone methyltransferase of Chlorobaculum tepidum (strain ATCC 49652 / DSM 12025 / NBRC 103806 / TLS) (Chlorobium tepidum).